Here is a 901-residue protein sequence, read N- to C-terminus: Protein translocase subunit SecA (901 aa).

Residues Gln-85, 103–107, and Asp-510 contribute to the ATP site; that span reads GEGKT. Residues 847 to 901 are disordered; that stretch reads TRINQNNLPVDENSQTTQNSETEDYSDRRIGRNEPCPCGSGKKYKHCHGSRVARQ. Residues 848–866 show a composition bias toward polar residues; it reads RINQNNLPVDENSQTTQNS. Zn(2+)-binding residues include Cys-882, Cys-884, Cys-893, and His-894. Residues 888–901 show a composition bias toward basic residues; sequence KKYKHCHGSRVARQ.

The protein belongs to the SecA family. Monomer and homodimer. Part of the essential Sec protein translocation apparatus which comprises SecA, SecYEG and auxiliary proteins SecDF-YajC and YidC. Zn(2+) serves as cofactor.

It is found in the cell inner membrane. Its subcellular location is the cytoplasm. It carries out the reaction ATP + H2O + cellular proteinSide 1 = ADP + phosphate + cellular proteinSide 2.. Its function is as follows. Part of the Sec protein translocase complex. Interacts with the SecYEG preprotein conducting channel. Has a central role in coupling the hydrolysis of ATP to the transfer of proteins into and across the cell membrane, serving both as a receptor for the preprotein-SecB complex and as an ATP-driven molecular motor driving the stepwise translocation of polypeptide chains across the membrane. In Haemophilus influenzae (strain PittGG), this protein is Protein translocase subunit SecA.